A 1802-amino-acid polypeptide reads, in one-letter code: Non-reducing polyketide synthase nscA (1802 aa).

The interval 27 to 261 is N-terminal acylcarrier protein transacylase domain (SAT); it reads DLFRRLDQHS…PLPVYDGLCH (235 aa). Residues 396 to 829 enclose the Ketosynthase family 3 (KS3) domain; sequence SSKLAIVGMA…GGNTTLLLED (434 aa). Catalysis depends on for beta-ketoacyl synthase activity residues cysteine 569, histidine 704, and histidine 747. Residues 935 to 1235 are malonyl-CoA:ACP transacylase (MAT) domain; it reads FTGQGAYYHG…SASAIPSCRR (301 aa). The interval 1322–1641 is product template (PT) domain; the sequence is TSLVHQITAE…RLLMDRFFSP (320 aa). The segment at 1326–1462 is N-terminal hotdog fold; the sequence is HQITAETVEA…ATIRFEDPEA (137 aa). The 311-residue stretch at 1326-1636 folds into the PKS/mFAS DH domain; that stretch reads HQITAETVEA…FRRVPRLLMD (311 aa). The Proton acceptor; for dehydratase activity role is filled by histidine 1358. The C-terminal hotdog fold stretch occupies residues 1490 to 1636; that stretch reads ASRLSKPLAY…FRRVPRLLMD (147 aa). Aspartate 1547 (proton donor; for dehydratase activity) is an active-site residue. Residues 1699-1729 form a disordered region; the sequence is LLATSSKSSTPKESPIVTPAESERAEPVDNS. Residues 1702–1713 are compositionally biased toward low complexity; it reads TSSKSSTPKESP. Residues 1725-1802 form the Carrier domain; sequence PVDNSMTSQC…EMTAWIEEYC (78 aa). Serine 1762 is modified (O-(pantetheine 4'-phosphoryl)serine).

Pantetheine 4'-phosphate serves as cofactor.

The protein operates within secondary metabolite biosynthesis. Functionally, non-reducing polyketide synthase; part of the gene cluster that mediates the biosynthesis of neosartoricin B, a prenylated anthracenone that probably exhibits T-cell antiproliferative activity, suggestive of a physiological role as an immunosuppressive agent. The non-reducing polyketide synthase nscA probably synthesizes and cyclizes the decaketide backbone. The hydrolase nscB then mediates the product release through hydrolysis followed by spontaneous decarboxylation. The prenyltransferase nscD catalyzes the addition of the dimethylallyl group to the aromatic C5. The FAD-dependent monooxygenase nscC is then responsible for the stereospecific hydroxylation at C2. Neosartoricin B can be converted into two additional compounds neosartoricins C and D. Neosartoricin C is a spirocyclic compound that is cyclized through the attack of C3 hydroxyl on C14, followed by dehydration. On the other hand, neosartoricin D is a further cyclized compound in which attack of C2 on C14 in neosartoricin C results in the formation of the acetal-containing dioxabicyclo-octanone ring. Both of these compounds are novel and possibly represent related metabolites of the gene cluster. The chain is Non-reducing polyketide synthase nscA from Trichophyton tonsurans (strain CBS 112818) (Scalp ringworm fungus).